Consider the following 458-residue polypeptide: tRNA modification GTPase MnmE (458 aa).

Residues Arg-22, Glu-84, and Arg-123 each coordinate (6S)-5-formyl-5,6,7,8-tetrahydrofolate. In terms of domain architecture, TrmE-type G spans 220-379; sequence GIATAIIGRP…LEKAIADLFF (160 aa). Asn-230 contributes to the K(+) binding site. Residues 230-235, 249-255, and 274-277 each bind GTP; these read NVGKSS, TDIAGTT, and DTAG. Position 234 (Ser-234) interacts with Mg(2+). Residues Thr-249, Ile-251, and Thr-254 each coordinate K(+). Thr-255 contributes to the Mg(2+) binding site. Lys-458 provides a ligand contact to (6S)-5-formyl-5,6,7,8-tetrahydrofolate.

It belongs to the TRAFAC class TrmE-Era-EngA-EngB-Septin-like GTPase superfamily. TrmE GTPase family. Homodimer. Heterotetramer of two MnmE and two MnmG subunits. It depends on K(+) as a cofactor.

It is found in the cytoplasm. Exhibits a very high intrinsic GTPase hydrolysis rate. Involved in the addition of a carboxymethylaminomethyl (cmnm) group at the wobble position (U34) of certain tRNAs, forming tRNA-cmnm(5)s(2)U34. The sequence is that of tRNA modification GTPase MnmE from Bacillus cereus (strain ATCC 14579 / DSM 31 / CCUG 7414 / JCM 2152 / NBRC 15305 / NCIMB 9373 / NCTC 2599 / NRRL B-3711).